Here is a 262-residue protein sequence, read N- to C-terminus: Protein BcsX (262 aa).

The protein operates within glycan metabolism; bacterial cellulose biosynthesis. The sequence is that of Protein BcsX (bcsX) from Komagataeibacter xylinus (Gluconacetobacter xylinus).